The primary structure comprises 243 residues: Carboxy-S-adenosyl-L-methionine synthase (243 aa).

Residues Tyr-40, 65-67 (GCS), 90-91 (DN), 118-119 (DI), Asn-133, and Arg-200 each bind S-adenosyl-L-methionine.

This sequence belongs to the class I-like SAM-binding methyltransferase superfamily. Cx-SAM synthase family. Homodimer.

It catalyses the reaction prephenate + S-adenosyl-L-methionine = carboxy-S-adenosyl-L-methionine + 3-phenylpyruvate + H2O. Its function is as follows. Catalyzes the conversion of S-adenosyl-L-methionine (SAM) to carboxy-S-adenosyl-L-methionine (Cx-SAM). The sequence is that of Carboxy-S-adenosyl-L-methionine synthase from Shewanella sp. (strain W3-18-1).